The chain runs to 291 residues: Transcription factor bHLH53 (291 aa).

The region spanning 163–212 (PTLSSQSIAARGRRRRIAEKTHELGKLIPGGNKLNTAEMFQAAAKYVKFL) is the bHLH domain.

As to quaternary structure, homodimer. As to expression, expressed constitutively in roots, leaves, stems, and flowers.

The protein localises to the nucleus. This is Transcription factor bHLH53 (BHLH53) from Arabidopsis thaliana (Mouse-ear cress).